The primary structure comprises 606 residues: Elongation factor 4 (606 aa).

In terms of domain architecture, tr-type G spans 10 to 192 (ENIRNFSIIA…AIVQQLPAPK (183 aa)). Residues 22-27 (DHGKST) and 139-142 (NKID) contribute to the GTP site.

This sequence belongs to the TRAFAC class translation factor GTPase superfamily. Classic translation factor GTPase family. LepA subfamily.

It localises to the cell membrane. It catalyses the reaction GTP + H2O = GDP + phosphate + H(+). In terms of biological role, required for accurate and efficient protein synthesis under certain stress conditions. May act as a fidelity factor of the translation reaction, by catalyzing a one-codon backward translocation of tRNAs on improperly translocated ribosomes. Back-translocation proceeds from a post-translocation (POST) complex to a pre-translocation (PRE) complex, thus giving elongation factor G a second chance to translocate the tRNAs correctly. Binds to ribosomes in a GTP-dependent manner. This is Elongation factor 4 from Lawsonia intracellularis (strain PHE/MN1-00).